A 301-amino-acid chain; its full sequence is GTPase Era (301 aa).

The Era-type G domain occupies 7 to 175 (YCGFIAIVGR…AAIVRKHLPE (169 aa)). The tract at residues 15–22 (GRPNVGKS) is G1. 15 to 22 (GRPNVGKS) serves as a coordination point for GTP. The G2 stretch occupies residues 41 to 45 (QTTRH). Residues 62-65 (DTPG) are G3. GTP contacts are provided by residues 62 to 66 (DTPGL) and 124 to 127 (NKVD). Residues 124-127 (NKVD) form a G4 region. Residues 154–156 (ISA) are G5. Residues 206–283 (LGAELPYSVT…HLELWVKVKS (78 aa)) form the KH type-2 domain.

The protein belongs to the TRAFAC class TrmE-Era-EngA-EngB-Septin-like GTPase superfamily. Era GTPase family. As to quaternary structure, monomer.

The protein localises to the cytoplasm. It localises to the cell inner membrane. Functionally, an essential GTPase that binds both GDP and GTP, with rapid nucleotide exchange. Plays a role in 16S rRNA processing and 30S ribosomal subunit biogenesis and possibly also in cell cycle regulation and energy metabolism. This is GTPase Era from Shigella flexneri.